The sequence spans 427 residues: MKRVRVIGAGISGSEACYQLLKRNYLVELFEVKSIKKNPIQTNDMFANLAYSDSFHSNEITSAKGLLKQEMRLLDSLIINAADYAKVANEPLLVDRYKFQEYITNYLRSHQNLKIIEKEYITIDDSVPTIIATGPLSSVNLENEIKNLVGESNFNLFDKVEPIVLKSSINLNYVQKSALDDKLFYCTLNKNEFEYLYNLIISAEIFVSPLPNEIKLLHDNGFRSIETVAKSSKNELKNLLQANEIRQTENTYATVLLREDDYNENFLRIVNFQTSIKIPWQNEIIKAVPALANALILRYGVMHKNDYINSANVLDDNFQLKSNPNIFFAGQLTGTDGYVEASASAIICAINVDRYLRNLPKAIPNNKTVIGSLCNYVLIANKEDFQPMEANWGLVESMNLVSYNNEGKKKLSDRAISEIKEFIKQNL.

8 to 13 (GAGISG) is an FAD binding site.

The protein belongs to the MnmG family. TrmFO subfamily. The cofactor is FAD.

It is found in the cytoplasm. It carries out the reaction uridine(54) in tRNA + (6R)-5,10-methylene-5,6,7,8-tetrahydrofolate + NADH + H(+) = 5-methyluridine(54) in tRNA + (6S)-5,6,7,8-tetrahydrofolate + NAD(+). The catalysed reaction is uridine(54) in tRNA + (6R)-5,10-methylene-5,6,7,8-tetrahydrofolate + NADPH + H(+) = 5-methyluridine(54) in tRNA + (6S)-5,6,7,8-tetrahydrofolate + NADP(+). Functionally, catalyzes the folate-dependent formation of 5-methyl-uridine at position 54 (M-5-U54) in all tRNAs. This chain is Methylenetetrahydrofolate--tRNA-(uracil-5-)-methyltransferase TrmFO, found in Mycoplasmopsis agalactiae (strain NCTC 10123 / CIP 59.7 / PG2) (Mycoplasma agalactiae).